A 489-amino-acid polypeptide reads, in one-letter code: UDP-N-acetylmuramate--L-alanine ligase (489 aa).

128 to 134 (GTHGKTT) contributes to the ATP binding site.

The protein belongs to the MurCDEF family.

The protein resides in the cytoplasm. The enzyme catalyses UDP-N-acetyl-alpha-D-muramate + L-alanine + ATP = UDP-N-acetyl-alpha-D-muramoyl-L-alanine + ADP + phosphate + H(+). It participates in cell wall biogenesis; peptidoglycan biosynthesis. Cell wall formation. The protein is UDP-N-acetylmuramate--L-alanine ligase of Shewanella woodyi (strain ATCC 51908 / MS32).